The sequence spans 565 residues: Sensor histidine kinase MtrB (565 aa).

Residues 1-13 show a composition bias toward basic residues; the sequence is MMWGSRRRTRSRW. The segment at 1-21 is disordered; it reads MMWGSRRRTRSRWGRSGPMTR. A run of 2 helical transmembrane segments spans residues 42-62 and 213-233; these read VVAL…FVLT and GTMI…ALLV. In terms of domain architecture, HAMP spans 235-287; it reads RQVVVPVRSASRIAERFAEGHLSERMPVRGEDDMARLAMSFNDMAESLSRQIT. The Histidine kinase domain occupies 302 to 519; it reads DVSHELRTPL…CFRLTLPLVR (218 aa). H305 bears the Phosphohistidine; by autocatalysis mark. The segment at 524–565 is disordered; that stretch reads TTSPLPMKPIPQPSPSGGQSPSTGPQHAKDRARQREHAERSL. A compositionally biased stretch (low complexity) spans 538–549; it reads PSGGQSPSTGPQ. Residues 550-565 show a composition bias toward basic and acidic residues; it reads HAKDRARQREHAERSL.

It localises to the cell membrane. The catalysed reaction is ATP + protein L-histidine = ADP + protein N-phospho-L-histidine.. In terms of biological role, member of the two-component regulatory system MtrA/MtrB. Seems to function as a membrane-associated protein kinase that phosphorylates MtrA in response to environmental signals. The polypeptide is Sensor histidine kinase MtrB (mtrB) (Mycolicibacterium paratuberculosis (strain ATCC BAA-968 / K-10) (Mycobacterium paratuberculosis)).